An 887-amino-acid polypeptide reads, in one-letter code: DNA mismatch repair protein MutS (887 aa).

ATP is bound at residue 621 to 628 (GPNMGGKS). A disordered region spans residues 828–853 (AEPEPNKPAAAAKTKPASPQPDLFAS). Residues 834–848 (KPAAAAKTKPASPQP) are compositionally biased toward low complexity.

It belongs to the DNA mismatch repair MutS family.

This protein is involved in the repair of mismatches in DNA. It is possible that it carries out the mismatch recognition step. This protein has a weak ATPase activity. The sequence is that of DNA mismatch repair protein MutS from Saccharophagus degradans (strain 2-40 / ATCC 43961 / DSM 17024).